Here is a 438-residue protein sequence, read N- to C-terminus: ATP synthase subunit alpha, chloroplastic (438 aa).

170 to 177 provides a ligand contact to ATP; sequence GDRQTGKT.

Belongs to the ATPase alpha/beta chains family. F-type ATPases have 2 components, CF(1) - the catalytic core - and CF(0) - the membrane proton channel. CF(1) has five subunits: alpha(3), beta(3), gamma(1), delta(1), epsilon(1). CF(0) has four main subunits: a, b, b' and c.

Its subcellular location is the plastid. The protein localises to the chloroplast thylakoid membrane. It catalyses the reaction ATP + H2O + 4 H(+)(in) = ADP + phosphate + 5 H(+)(out). Produces ATP from ADP in the presence of a proton gradient across the membrane. The alpha chain is a regulatory subunit. This is ATP synthase subunit alpha, chloroplastic from Ochrosphaera neapolitana.